The chain runs to 725 residues: Polyribonucleotide nucleotidyltransferase (725 aa).

Residues aspartate 487 and aspartate 493 each contribute to the Mg(2+) site. A KH domain is found at 554 to 613; the sequence is PRIETMQIPTDKIREVIGTGGKVIREIVEKTGAKIDIQDTGVIKIASSDAKAIKAAYNWI. Positions 623–691 constitute an S1 motif domain; sequence GMIYDGTVVK…ERGKIRLSMK (69 aa). The tract at residues 697-725 is disordered; the sequence is TGEDITEKLKAEREADRNRERQARQSAGE. A compositionally biased stretch (basic and acidic residues) spans 701–719; sequence ITEKLKAEREADRNRERQA.

It belongs to the polyribonucleotide nucleotidyltransferase family. The cofactor is Mg(2+).

It localises to the cytoplasm. It carries out the reaction RNA(n+1) + phosphate = RNA(n) + a ribonucleoside 5'-diphosphate. In terms of biological role, involved in mRNA degradation. Catalyzes the phosphorolysis of single-stranded polyribonucleotides processively in the 3'- to 5'-direction. The sequence is that of Polyribonucleotide nucleotidyltransferase from Methylobacterium nodulans (strain LMG 21967 / CNCM I-2342 / ORS 2060).